A 261-amino-acid chain; its full sequence is Tyrosine phosphatase-like protein H5 (261 aa).

The 236-residue stretch at 26 to 261 (LIKKEHDKVL…ESVEQEYFVP (236 aa)) folds into the Tyrosine-protein phosphatase domain.

This sequence belongs to the protein-tyrosine phosphatase family.

This Microplitis demolitor bracovirus (isolate Webb) (MdBV) protein is Tyrosine phosphatase-like protein H5 (H6).